The primary structure comprises 184 residues: Peptide deformylase 2 (184 aa).

2 residues coordinate Fe cation: cysteine 110 and histidine 153. Glutamate 154 is a catalytic residue. Histidine 157 lines the Fe cation pocket.

The protein belongs to the polypeptide deformylase family. The cofactor is Fe(2+).

It catalyses the reaction N-terminal N-formyl-L-methionyl-[peptide] + H2O = N-terminal L-methionyl-[peptide] + formate. Removes the formyl group from the N-terminal Met of newly synthesized proteins. Requires at least a dipeptide for an efficient rate of reaction. N-terminal L-methionine is a prerequisite for activity but the enzyme has broad specificity at other positions. In Geobacillus stearothermophilus (Bacillus stearothermophilus), this protein is Peptide deformylase 2.